The chain runs to 131 residues: Glycine cleavage system H protein (131 aa).

The Lipoyl-binding domain occupies 24–106; sequence RAIVGVSDHA…YGEGWIMVIE (83 aa). Lysine 65 is subject to N6-lipoyllysine.

The protein belongs to the GcvH family. As to quaternary structure, the glycine cleavage system is composed of four proteins: P, T, L and H. It depends on (R)-lipoate as a cofactor.

Functionally, the glycine cleavage system catalyzes the degradation of glycine. The H protein shuttles the methylamine group of glycine from the P protein to the T protein. In Xylella fastidiosa (strain Temecula1 / ATCC 700964), this protein is Glycine cleavage system H protein.